The chain runs to 104 residues: Large ribosomal subunit protein bL21 (104 aa).

It belongs to the bacterial ribosomal protein bL21 family. Part of the 50S ribosomal subunit. Contacts protein L20.

Its function is as follows. This protein binds to 23S rRNA in the presence of protein L20. In Rhodopirellula baltica (strain DSM 10527 / NCIMB 13988 / SH1), this protein is Large ribosomal subunit protein bL21.